A 295-amino-acid chain; its full sequence is Ribosomal RNA small subunit methyltransferase H (295 aa).

S-adenosyl-L-methionine is bound by residues 36-38, Asp56, Leu90, Asp104, and His111; that span reads GGH.

The protein belongs to the methyltransferase superfamily. RsmH family.

The protein resides in the cytoplasm. The catalysed reaction is cytidine(1402) in 16S rRNA + S-adenosyl-L-methionine = N(4)-methylcytidine(1402) in 16S rRNA + S-adenosyl-L-homocysteine + H(+). Specifically methylates the N4 position of cytidine in position 1402 (C1402) of 16S rRNA. The protein is Ribosomal RNA small subunit methyltransferase H of Dictyoglomus turgidum (strain DSM 6724 / Z-1310).